Reading from the N-terminus, the 285-residue chain is Sulfur carrier protein TtuD (285 aa).

2 consecutive Rhodanese domains span residues 20–127 (EDPK…PLTT) and 161–281 (KEGK…VPIA). Residue cysteine 240 is modified to Cysteine persulfide.

Cys-240 can accept a sulfur atom as persulfide forms from cysteine desulfurases IscS and SufS.

It participates in tRNA modification. In terms of biological role, required for the efficient 2-thiolation of 5-methyluridine residue at position 54 in the T loop of tRNAs, leading to 5-methyl-2-thiouridine (m(5)s(2)U or s(2)T). TtuD is a sulfur carrier protein that has a role to direct sulfur flow from cysteine desulfurases to m(5)s(2)U synthesis in vivo. It enhances the cysteine desulfurase activity of IscS and SufS, as well as the formation of thiocarboxylated TtuB (TtuB-COSH) in the presence of these desulfurases. This chain is Sulfur carrier protein TtuD, found in Thermus thermophilus (strain ATCC BAA-163 / DSM 7039 / HB27).